Reading from the N-terminus, the 293-residue chain is tRNA pseudouridine synthase B (293 aa).

D40 functions as the Nucleophile in the catalytic mechanism.

The protein belongs to the pseudouridine synthase TruB family. Type 1 subfamily.

The catalysed reaction is uridine(55) in tRNA = pseudouridine(55) in tRNA. In terms of biological role, responsible for synthesis of pseudouridine from uracil-55 in the psi GC loop of transfer RNAs. In Rickettsia akari (strain Hartford), this protein is tRNA pseudouridine synthase B.